Here is a 140-residue protein sequence, read N- to C-terminus: Probable glycine cleavage system H protein 3 (140 aa).

The Lipoyl-binding domain occupies 29 to 110 (VVSIGVTDLG…PYDSWIVKIR (82 aa)). Lys70 carries the N6-lipoyllysine modification.

Belongs to the GcvH family. In terms of assembly, the glycine cleavage system is composed of four proteins: P, T, L and H. (R)-lipoate is required as a cofactor.

Functionally, the glycine cleavage system catalyzes the degradation of glycine. The H protein shuttles the methylamine group of glycine from the P protein to the T protein. The sequence is that of Probable glycine cleavage system H protein 3 from Saccharolobus solfataricus (strain ATCC 35092 / DSM 1617 / JCM 11322 / P2) (Sulfolobus solfataricus).